The primary structure comprises 66 residues: Conotoxin Cl14.1a (66 aa).

The N-terminal stretch at 1–19 (MNVTAMFIVLLLTMPLTDG) is a signal peptide. The propeptide occupies 20-49 (FNIRAINGGELFGLVQRDAGNALDHGFYRR).

Belongs to the conotoxin L superfamily. Post-translationally, contains 2 disulfide bonds. Expressed by the venom duct.

The protein resides in the secreted. Functionally, probable neurotoxin with unknown target. Possibly targets ion channels. This peptide could be considered as an apoptosis activator in some cancers (tested on lung and breast cancer cell lines). Provokes the decrease of H1299 lung cancer cells viability after 24 hours treatment, and induces a high Bax/Bcl-2 ratio, which suggests that this peptide can activate apoptosis in H1299 cells. In addition, H1299 and H1437 lung cancer cell lines treated with this peptide have decreased cell viability, activated caspases, and reduced expression of the pro-survival protein NF-kappa-B (NFKB1), indicating activation of apoptosis. In synergy with MicroRNA-101-3p, this synthetic peptide inhibits breast cancer cells (SK-BR-3 and MCF-7) migration, invasion, and proliferation through suppressing the expression of the methyltransferase EZH2. In parallel, this synergy treatment is able to promote the apoptosis of breast cancer cells. Against microbes, this synthetic toxin (at micromolar concentrations) lowers viability and inhibits host cell invasion by the opportunistic parasite Toxoplasma gondii (tachyzoite form). In addition, it permits T.gondii intracellular replication to decrease while viability of the host cell is unaffected. This Californiconus californicus (California cone) protein is Conotoxin Cl14.1a.